Consider the following 147-residue polypeptide: Thyrotropin subunit beta (147 aa).

Positions Met-1–Pro-20 are cleaved as a signal peptide. Cystine bridges form between Cys-22–Cys-72, Cys-36–Cys-87, Cys-39–Cys-127, Cys-47–Cys-103, Cys-51–Cys-105, and Cys-108–Cys-115. N-linked (GlcNAc...) asparagine glycosylation occurs at Asn-43.

It belongs to the glycoprotein hormones subunit beta family. In terms of assembly, heterodimer of a common alpha chain and a unique beta chain which confers biological specificity to thyrotropin, lutropin, follitropin and gonadotropin. Pituitary gland. Higher levels seen in immature fishes than the mature fishes.

It is found in the secreted. Indispensable for the control of thyroid structure and metabolism. May play some role in the biological processes of the immature fishes. This chain is Thyrotropin subunit beta (tshb), found in Oncorhynchus mykiss (Rainbow trout).